The chain runs to 360 residues: Magnesium transporter NIPA2 (360 aa).

At 1-9 the chain is on the extracellular side; sequence MSQGRGKYD. A helical membrane pass occupies residues 10-30; sequence FYIGLGLAMSSSIFIGGSFIL. Residues 31–56 lie on the Cytoplasmic side of the membrane; the sequence is KKKGLLRLARKGSMRAGQGGHAYLKE. A helical membrane pass occupies residues 57–77; sequence WLWWAGLLSMGAGEVANFAAY. A topological domain (extracellular) is located at residue Ala78. The helical transmembrane segment at 79–99 threads the bilayer; that stretch reads FAPATLVTPLGALSVLVSAIL. Residues 100–107 lie on the Cytoplasmic side of the membrane; the sequence is SSYFLNER. A helical transmembrane segment spans residues 108 to 128; that stretch reads LNLHGKIGCLLSILGSTVMVI. The Extracellular portion of the chain corresponds to 129–149; that stretch reads HAPKEEEIETLNEMSHKLGDP. Residues 150 to 170 form a helical membrane-spanning segment; the sequence is GFVVFATLVVIVALILIFVVG. Over 171 to 175 the chain is Cytoplasmic; that stretch reads PRHGQ. The chain crosses the membrane as a helical span at residues 176–196; the sequence is TNILVYITICSVIGAFSVSCV. At 197-215 the chain is on the extracellular side; it reads KGLGIAIKELFAGKPVLRH. The chain crosses the membrane as a helical span at residues 216–236; the sequence is PLAWILLLSLIVCVSTQINYL. Residues 237–246 are Cytoplasmic-facing; the sequence is NRALDIFNTS. Residues 247-267 form a helical membrane-spanning segment; that stretch reads IVTPIYYVFFTTSVLTCSAIL. The Extracellular portion of the chain corresponds to 268-278; that stretch reads FKEWQDMPVDD. The helical transmembrane segment at 279-299 threads the bilayer; it reads VIGTLSGFFTIIVGIFLLHAF. The Cytoplasmic segment spans residues 300–360; that stretch reads KDVSFSLASL…SRRNGNLTAF (61 aa).

The protein belongs to the NIPA family. As to expression, widely expressed.

It localises to the cell membrane. The protein resides in the early endosome. The catalysed reaction is Mg(2+)(in) = Mg(2+)(out). Its function is as follows. Acts as a selective Mg(2+) transporter. The chain is Magnesium transporter NIPA2 (NIPA2) from Homo sapiens (Human).